Here is a 191-residue protein sequence, read N- to C-terminus: Putative glutathione-dependent formaldehyde-activating enzyme (191 aa).

Positions 20 to 166 (FAGGNLYCKC…FKAVGLETYD (147 aa)) constitute a CENP-V/GFA domain. Cysteine 27, cysteine 29, cysteine 48, cysteine 50, cysteine 53, cysteine 95, and cysteine 98 together coordinate Zn(2+).

It belongs to the Gfa family. The cofactor is Zn(2+).

It carries out the reaction S-(hydroxymethyl)glutathione = glutathione + formaldehyde. It functions in the pathway one-carbon metabolism; formaldehyde degradation; formate from formaldehyde (glutathione route): step 1/3. In terms of biological role, catalyzes the condensation of formaldehyde and glutathione to S-hydroxymethylglutathione. The sequence is that of Putative glutathione-dependent formaldehyde-activating enzyme from Aspergillus terreus (strain NIH 2624 / FGSC A1156).